The primary structure comprises 203 residues: Ribosomal RNA large subunit methyltransferase E (203 aa).

Residues G60, W62, D79, D95, and D119 each coordinate S-adenosyl-L-methionine. Catalysis depends on K159, which acts as the Proton acceptor.

Belongs to the class I-like SAM-binding methyltransferase superfamily. RNA methyltransferase RlmE family.

It is found in the cytoplasm. The catalysed reaction is uridine(2552) in 23S rRNA + S-adenosyl-L-methionine = 2'-O-methyluridine(2552) in 23S rRNA + S-adenosyl-L-homocysteine + H(+). Functionally, specifically methylates the uridine in position 2552 of 23S rRNA at the 2'-O position of the ribose in the fully assembled 50S ribosomal subunit. This Pelagibacter ubique (strain HTCC1062) protein is Ribosomal RNA large subunit methyltransferase E.